Here is a 249-residue protein sequence, read N- to C-terminus: FMN reductase [NAD(P)H] (249 aa).

Residues H11–R15, Q67, P134–G136, and K173–R175 contribute to the FMN site.

This sequence belongs to the flavin oxidoreductase frp family. Homodimer.

The catalysed reaction is FMNH2 + NADP(+) = FMN + NADPH + 2 H(+). It carries out the reaction FMNH2 + NAD(+) = FMN + NADH + 2 H(+). FMN is a competitive inhibitor of NADH, and therefore leads to the preferential utilization of NADPH. Functionally, reduces FMNH(2) to FMN, with NADH or NADPH as reductant. It also reduces nitroaromatic compounds, quinones, chromates and azo dyes. It could supply the reduced form of FMN to luciferase-like protein and contribute to the degradation of aromatic compounds. The chain is FMN reductase [NAD(P)H] (nfrA2) from Bacillus subtilis (strain 168).